We begin with the raw amino-acid sequence, 258 residues long: MHTKRIIPCLDVHNGRVVKGTNFLNLRDAGDPVLVGAEYGQAGADELVFLDITASSDARTIKLDMVRKVAETVFIPFTVGGGIRSIEDFKLILREGADKIAVNTAAIMNPTLISEAADKFGSQCVVVAIDAKCRPDNSGWNIYKNGGRIDMGIDAVEWAMKANELGAGEILLTSMDCDGTKNGYDLELTKQISENVSIPVIASGGAGTKEHFYEALTRGKADAVLAASLFHYKELEINDLKEYLRMKEVSVRLEDRSC.

Catalysis depends on residues Asp-11 and Asp-130.

Belongs to the HisA/HisF family. As to quaternary structure, heterodimer of HisH and HisF.

The protein resides in the cytoplasm. The catalysed reaction is 5-[(5-phospho-1-deoxy-D-ribulos-1-ylimino)methylamino]-1-(5-phospho-beta-D-ribosyl)imidazole-4-carboxamide + L-glutamine = D-erythro-1-(imidazol-4-yl)glycerol 3-phosphate + 5-amino-1-(5-phospho-beta-D-ribosyl)imidazole-4-carboxamide + L-glutamate + H(+). The protein operates within amino-acid biosynthesis; L-histidine biosynthesis; L-histidine from 5-phospho-alpha-D-ribose 1-diphosphate: step 5/9. Its function is as follows. IGPS catalyzes the conversion of PRFAR and glutamine to IGP, AICAR and glutamate. The HisF subunit catalyzes the cyclization activity that produces IGP and AICAR from PRFAR using the ammonia provided by the HisH subunit. The polypeptide is Imidazole glycerol phosphate synthase subunit HisF (Lachnoclostridium phytofermentans (strain ATCC 700394 / DSM 18823 / ISDg) (Clostridium phytofermentans)).